Here is a 491-residue protein sequence, read N- to C-terminus: Aspartyl/glutamyl-tRNA(Asn/Gln) amidotransferase subunit B (491 aa).

The protein belongs to the GatB/GatE family. GatB subfamily. Heterotrimer of A, B and C subunits.

The catalysed reaction is L-glutamyl-tRNA(Gln) + L-glutamine + ATP + H2O = L-glutaminyl-tRNA(Gln) + L-glutamate + ADP + phosphate + H(+). It catalyses the reaction L-aspartyl-tRNA(Asn) + L-glutamine + ATP + H2O = L-asparaginyl-tRNA(Asn) + L-glutamate + ADP + phosphate + 2 H(+). Functionally, allows the formation of correctly charged Asn-tRNA(Asn) or Gln-tRNA(Gln) through the transamidation of misacylated Asp-tRNA(Asn) or Glu-tRNA(Gln) in organisms which lack either or both of asparaginyl-tRNA or glutaminyl-tRNA synthetases. The reaction takes place in the presence of glutamine and ATP through an activated phospho-Asp-tRNA(Asn) or phospho-Glu-tRNA(Gln). The protein is Aspartyl/glutamyl-tRNA(Asn/Gln) amidotransferase subunit B of Parasynechococcus marenigrum (strain WH8102).